A 196-amino-acid polypeptide reads, in one-letter code: NADH-quinone oxidoreductase subunit B (196 aa).

Cysteine 63, cysteine 64, cysteine 129, and cysteine 159 together coordinate [4Fe-4S] cluster.

The protein belongs to the complex I 20 kDa subunit family. NDH-1 is composed of 14 different subunits. Subunits NuoB, C, D, E, F, and G constitute the peripheral sector of the complex. It depends on [4Fe-4S] cluster as a cofactor.

Its subcellular location is the cell inner membrane. It carries out the reaction a quinone + NADH + 5 H(+)(in) = a quinol + NAD(+) + 4 H(+)(out). In terms of biological role, NDH-1 shuttles electrons from NADH, via FMN and iron-sulfur (Fe-S) centers, to quinones in the respiratory chain. The immediate electron acceptor for the enzyme in this species is believed to be a menaquinone. Couples the redox reaction to proton translocation (for every two electrons transferred, four hydrogen ions are translocated across the cytoplasmic membrane), and thus conserves the redox energy in a proton gradient. The polypeptide is NADH-quinone oxidoreductase subunit B (Bacteroides fragilis (strain ATCC 25285 / DSM 2151 / CCUG 4856 / JCM 11019 / LMG 10263 / NCTC 9343 / Onslow / VPI 2553 / EN-2)).